Consider the following 343-residue polypeptide: General stress protein 30 (343 aa).

This sequence belongs to the polysaccharide pyruvyl transferase family.

The sequence is that of General stress protein 30 (yxaB) from Bacillus subtilis (strain 168).